A 259-amino-acid chain; its full sequence is Phosphate import ATP-binding protein PstB (259 aa).

One can recognise an ABC transporter domain in the interval 13-254 (IAVKNLNFFY…PTRKETEDYI (242 aa)). Residue 45 to 52 (GPSGCGKS) participates in ATP binding.

It belongs to the ABC transporter superfamily. Phosphate importer (TC 3.A.1.7) family. In terms of assembly, the complex is composed of two ATP-binding proteins (PstB), two transmembrane proteins (PstC and PstA) and a solute-binding protein (PstS).

It localises to the cell inner membrane. The enzyme catalyses phosphate(out) + ATP + H2O = ADP + 2 phosphate(in) + H(+). Part of the ABC transporter complex PstSACB involved in phosphate import. Responsible for energy coupling to the transport system. This is Phosphate import ATP-binding protein PstB from Albidiferax ferrireducens (strain ATCC BAA-621 / DSM 15236 / T118) (Rhodoferax ferrireducens).